Here is a 464-residue protein sequence, read N- to C-terminus: NADH-quinone oxidoreductase subunit N (464 aa).

The next 14 helical transmembrane spans lie at 6–26, 36–56, 75–95, 101–121, 123–143, 157–177, 197–217, 231–253, 257–279, 293–313, 317–337, 360–380, 395–415, and 439–459; these read FLYI…LVLG, SMSL…LIYF, CLAR…FFFA, YEFA…VEAH, FLSF…LVCF, FFVL…LVYG, LGAT…LGAV, PTVA…FAGL, VVIP…MVVG, FAYA…TGVV, PVLF…TVLL, AFTF…SGFF, FGVP…IPCF, and NVGL…VVLL.

The protein belongs to the complex I subunit 2 family. NDH-1 is composed of 14 different subunits. Subunits NuoA, H, J, K, L, M, N constitute the membrane sector of the complex.

Its subcellular location is the cell inner membrane. The catalysed reaction is a quinone + NADH + 5 H(+)(in) = a quinol + NAD(+) + 4 H(+)(out). Its function is as follows. NDH-1 shuttles electrons from NADH, via FMN and iron-sulfur (Fe-S) centers, to quinones in the respiratory chain. The immediate electron acceptor for the enzyme in this species is believed to be ubiquinone. Couples the redox reaction to proton translocation (for every two electrons transferred, four hydrogen ions are translocated across the cytoplasmic membrane), and thus conserves the redox energy in a proton gradient. In Anaplasma phagocytophilum (strain HZ), this protein is NADH-quinone oxidoreductase subunit N.